We begin with the raw amino-acid sequence, 72 residues long: Translation initiation factor IF-1 (72 aa).

An S1-like domain is found at 1 to 72; sequence MAKEDVIEVE…TRGRITYRYK (72 aa). Residue Tyr60 is modified to Phosphotyrosine.

This sequence belongs to the IF-1 family. As to quaternary structure, component of the 30S ribosomal translation pre-initiation complex which assembles on the 30S ribosome in the order IF-2 and IF-3, IF-1 and N-formylmethionyl-tRNA(fMet); mRNA recruitment can occur at any time during PIC assembly.

It localises to the cytoplasm. Functionally, one of the essential components for the initiation of protein synthesis. Stabilizes the binding of IF-2 and IF-3 on the 30S subunit to which N-formylmethionyl-tRNA(fMet) subsequently binds. Helps modulate mRNA selection, yielding the 30S pre-initiation complex (PIC). Upon addition of the 50S ribosomal subunit IF-1, IF-2 and IF-3 are released leaving the mature 70S translation initiation complex. The sequence is that of Translation initiation factor IF-1 from Shouchella clausii (strain KSM-K16) (Alkalihalobacillus clausii).